The chain runs to 85 residues: DNA-directed RNA polymerase subunit Rpo11 (85 aa).

The protein belongs to the archaeal Rpo11/eukaryotic RPB11/RPC19 RNA polymerase subunit family. Part of the RNA polymerase complex.

Its subcellular location is the cytoplasm. It carries out the reaction RNA(n) + a ribonucleoside 5'-triphosphate = RNA(n+1) + diphosphate. In terms of biological role, DNA-dependent RNA polymerase (RNAP) catalyzes the transcription of DNA into RNA using the four ribonucleoside triphosphates as substrates. This Methanothermobacter thermautotrophicus (strain ATCC 29096 / DSM 1053 / JCM 10044 / NBRC 100330 / Delta H) (Methanobacterium thermoautotrophicum) protein is DNA-directed RNA polymerase subunit Rpo11.